An 879-amino-acid chain; its full sequence is Protein translocase subunit SecA (879 aa).

ATP-binding positions include glutamine 87, 105-109 (GEGKT), and aspartate 509. The segment at 834–879 (IAEDSEKLKPITGTKKPKRNDPCPCGSGKKYKNCCGQSGPKKGLLA) is disordered. The Zn(2+) site is built by cysteine 856, cysteine 858, cysteine 867, and cysteine 868.

It belongs to the SecA family. As to quaternary structure, monomer and homodimer. Part of the essential Sec protein translocation apparatus which comprises SecA, SecYEG and auxiliary proteins SecDF-YajC and YidC. Requires Zn(2+) as cofactor.

The protein localises to the cell inner membrane. Its subcellular location is the cytoplasm. It catalyses the reaction ATP + H2O + cellular proteinSide 1 = ADP + phosphate + cellular proteinSide 2.. Part of the Sec protein translocase complex. Interacts with the SecYEG preprotein conducting channel. Has a central role in coupling the hydrolysis of ATP to the transfer of proteins into and across the cell membrane, serving as an ATP-driven molecular motor driving the stepwise translocation of polypeptide chains across the membrane. This Sulfurovum sp. (strain NBC37-1) protein is Protein translocase subunit SecA.